We begin with the raw amino-acid sequence, 395 residues long: D-alanine--D-alanine ligase (395 aa).

In terms of domain architecture, ATP-grasp spans Lys172–Glu391. Asp204–Glu266 is an ATP binding site. Mg(2+) contacts are provided by Asp345, Glu358, and Asn360.

It belongs to the D-alanine--D-alanine ligase family. Mg(2+) is required as a cofactor. It depends on Mn(2+) as a cofactor.

Its subcellular location is the cytoplasm. It catalyses the reaction 2 D-alanine + ATP = D-alanyl-D-alanine + ADP + phosphate + H(+). Its pathway is cell wall biogenesis; peptidoglycan biosynthesis. Its function is as follows. Cell wall formation. The polypeptide is D-alanine--D-alanine ligase (Bifidobacterium longum subsp. infantis (strain ATCC 15697 / DSM 20088 / JCM 1222 / NCTC 11817 / S12)).